A 232-amino-acid chain; its full sequence is Putative N-acetylmannosamine-6-phosphate 2-epimerase (232 aa).

Belongs to the NanE family.

It catalyses the reaction an N-acyl-D-glucosamine 6-phosphate = an N-acyl-D-mannosamine 6-phosphate. It functions in the pathway amino-sugar metabolism; N-acetylneuraminate degradation; D-fructose 6-phosphate from N-acetylneuraminate: step 3/5. Functionally, converts N-acetylmannosamine-6-phosphate (ManNAc-6-P) to N-acetylglucosamine-6-phosphate (GlcNAc-6-P). The protein is Putative N-acetylmannosamine-6-phosphate 2-epimerase of Borreliella burgdorferi (strain ZS7) (Borrelia burgdorferi).